The chain runs to 218 residues: MAFYLPDWSCCGLWLFGRPRNRYSQLPEEPETFECPDRWRAEIDLGLPPGVQVGDLLRNEQTMGSLRQVYLLAVQANSITDHLKRFDAVRVPESCRGVVEAQVAKLEAVRSVIWNTMISLAVSGIEMDENGLKALLDKQAGDSLALMEMEKVATALKMDETGAWAQEISAVVSSVTAPSASAPFINSAFEPEVPTPVLAPPPVVRQPEHSGPTELALT.

A lipid anchor (S-palmitoyl cysteine; by host) is attached at Cys11. Residues 199-218 (APPPVVRQPEHSGPTELALT) form a disordered region.

The protein belongs to the herpesviridae UL51 family. As to quaternary structure, homodimer. Interacts with BBRF2; the BBRF2-BSRF1 complexes oligomerize which might play a role in tethering the viral nucleocapsids to the host Golgi membrane during secondary envelopment. Interacts with BGLF3.5. Interacts with BALF1. Interacts with glycoprotein gB. Interacts with glycoprotein heterodimer gH/gL. Phosphorylated. Post-translationally, palmitoylation is necessary for Golgi localization.

Its subcellular location is the host cytoplasm. It is found in the virion. It localises to the host Golgi apparatus. In terms of biological role, plays several roles during the time course of infection, including egress of virus particles from the perinuclear space and secondary envelopment of cytoplasmic capsids that bud into specific trans-Golgi network (TGN)-derived membranes. The protein is Tegument protein UL51 homolog of Homo sapiens (Human).